Reading from the N-terminus, the 655-residue chain is Import motor subunit, mitochondrial (655 aa).

The transit peptide at 1–23 (MLAAKNILNRSSLSSSFRIATRL) directs the protein to the mitochondrion. Thr330 carries the post-translational modification Phosphothreonine. The disordered stretch occupies residues 629–655 (EQLYKNDSNNNNNNNNGNNAESDETKQ). Residues 637–647 (NNNNNNNNGNN) show a composition bias toward low complexity.

This sequence belongs to the heat shock protein 70 family. As to quaternary structure, component of the PAM complex, at least composed of SSC1 (mtHsp70), MGE1, TIM44, PAM16/TIM16, PAM17 and PAM18/TIM14. In the complex, SSC1 interacts directly with PAM18 and TIM44. Interacts with NAP1. Component of endonuclease SceI (endo.SceI), which is a heterodimer of ENS2 and SSC1.

Its subcellular location is the mitochondrion matrix. It catalyses the reaction ATP + H2O = ADP + phosphate + H(+). Functionally, essential component of the PAM complex, a complex required for the translocation of transit peptide-containing proteins from the inner membrane into the mitochondrial matrix in an ATP-dependent manner. Constitutes the ATP-driven core of the motor and binds the precursor preprotein. Required for the import of the processed frataxin homolog YFH1 into the mitochondrion. Acts as a non-catalytic component of endonuclease SceI (endo.SceI), which cleaves specifically at multiple sites on mitochondrial DNA and produces double-stranded breaks. SSC1 confers broader sequence specificity, greater stability, and higher activity on the catalytic subunit. This chain is Import motor subunit, mitochondrial, found in Saccharomyces cerevisiae (Baker's yeast).